The primary structure comprises 456 residues: Bis(5'-adenosyl)-triphosphatase enpp4 (456 aa).

A signal peptide spans 1–18; the sequence is MFNMKILVIPLFWGLVTG. Residues 19–410 lie on the Extracellular side of the membrane; that stretch reads YKGNSSDSSA…DQWCINLPEA (392 aa). Residues aspartate 37 and threonine 73 each coordinate Zn(2+). The AMP-threonine intermediate role is filled by threonine 73. Residue asparagine 94 participates in substrate binding. The N-linked (GlcNAc...) asparagine glycan is linked to asparagine 148. Tyrosine 157 is a substrate binding site. Residue asparagine 169 is glycosylated (N-linked (GlcNAc...) asparagine). Zn(2+)-binding residues include aspartate 192, histidine 196, aspartate 240, and histidine 241. Aspartate 192 is a binding site for substrate. A disulfide bond links cysteine 257 and cysteine 290. Asparagine 279 and asparagine 330 each carry an N-linked (GlcNAc...) asparagine glycan. Residue histidine 339 participates in Zn(2+) binding. N-linked (GlcNAc...) asparagine glycosylation is present at asparagine 389. Cysteine 397 and cysteine 404 are joined by a disulfide. A helical membrane pass occupies residues 411 to 431; the sequence is IGIVVSALLVLTMLTGLMIFM. Over 432 to 456 the chain is Cytoplasmic; sequence RSRASTSRPFSRLQLQEDDDDPLID.

Belongs to the nucleotide pyrophosphatase/phosphodiesterase family. Zn(2+) is required as a cofactor.

The protein localises to the cell membrane. The enzyme catalyses P(1),P(3)-bis(5'-adenosyl) triphosphate + H2O = AMP + ADP + 2 H(+). In terms of biological role, hydrolyzes extracellular Ap3A into AMP and ADP, and Ap4A into AMP and ATP. Ap3A and Ap4A are diadenosine polyphosphates thought to induce proliferation of vascular smooth muscle cells. Acts as a procoagulant, mediating platelet aggregation at the site of nascent thrombus via release of ADP from Ap3A and activation of ADP receptors. The sequence is that of Bis(5'-adenosyl)-triphosphatase enpp4 (Enpp4) from Mus musculus (Mouse).